Reading from the N-terminus, the 78-residue chain is Acyl carrier protein (78 aa).

The Carrier domain occupies 2–77 (SEIASRVKAI…DAVSYIEANA (76 aa)). Ser-37 is subject to O-(pantetheine 4'-phosphoryl)serine.

This sequence belongs to the acyl carrier protein (ACP) family. 4'-phosphopantetheine is transferred from CoA to a specific serine of apo-ACP by AcpS. This modification is essential for activity because fatty acids are bound in thioester linkage to the sulfhydryl of the prosthetic group.

The protein resides in the cytoplasm. It functions in the pathway lipid metabolism; fatty acid biosynthesis. Carrier of the growing fatty acid chain in fatty acid biosynthesis. In Phocaeicola vulgatus (strain ATCC 8482 / DSM 1447 / JCM 5826 / CCUG 4940 / NBRC 14291 / NCTC 11154) (Bacteroides vulgatus), this protein is Acyl carrier protein.